A 103-amino-acid polypeptide reads, in one-letter code: Cyclotide vitri-A (103 aa).

The first 9 residues, 1–9 (AAFALPAFA), serve as a signal peptide directing secretion. Positions 10-69 (SFEKDVITPAALEAVLNRKAPLSNIMMENDAIVNVIANVKTVISNPVLEEALLKTNHGVN) are excised as a propeptide. Positions 70–99 (GIPCGESCVWIPCITSAIGCSCKSKVCYRN) form a cross-link, cyclopeptide (Gly-Asn). Disulfide bonds link C73/C89, C77/C91, and C82/C96. Positions 100-103 (SLDN) are excised as a propeptide.

Post-translationally, this is a cyclic peptide.

Probably participates in a plant defense mechanism. The polypeptide is Cyclotide vitri-A (Viola biflora (Yellow wood violet)).